The following is a 503-amino-acid chain: Cytochrome P450 3A7 (503 aa).

Cysteine 442 is a binding site for heme.

This sequence belongs to the cytochrome P450 family. It depends on heme as a cofactor. In terms of tissue distribution, expressed in fetal liver (at protein level).

It is found in the endoplasmic reticulum membrane. The protein localises to the microsome membrane. The catalysed reaction is an organic molecule + reduced [NADPH--hemoprotein reductase] + O2 = an alcohol + oxidized [NADPH--hemoprotein reductase] + H2O + H(+). The enzyme catalyses 3beta-hydroxyandrost-5-en-17-one + reduced [NADPH--hemoprotein reductase] + O2 = 3beta,16alpha-dihydroxy-androst-5-en-17-one + oxidized [NADPH--hemoprotein reductase] + H2O + H(+). It carries out the reaction dehydroepiandrosterone 3-sulfate + reduced [NADPH--hemoprotein reductase] + O2 = 16alpha-hydroxydehydroepiandrosterone 3-sulfate + oxidized [NADPH--hemoprotein reductase] + H2O + H(+). It catalyses the reaction testosterone + reduced [NADPH--hemoprotein reductase] + O2 = 6beta,17beta-dihydroxyandrost-4-en-3-one + oxidized [NADPH--hemoprotein reductase] + H2O + H(+). The catalysed reaction is estrone + reduced [NADPH--hemoprotein reductase] + O2 = 2-hydroxyestrone + oxidized [NADPH--hemoprotein reductase] + H2O + H(+). The enzyme catalyses estrone + reduced [NADPH--hemoprotein reductase] + O2 = 4-hydroxyestrone + oxidized [NADPH--hemoprotein reductase] + H2O + H(+). It carries out the reaction estrone + reduced [NADPH--hemoprotein reductase] + O2 = 16alpha-hydroxyestrone + oxidized [NADPH--hemoprotein reductase] + H2O + H(+). It catalyses the reaction 17beta-estradiol + reduced [NADPH--hemoprotein reductase] + O2 = 2-hydroxy-17beta-estradiol + oxidized [NADPH--hemoprotein reductase] + H2O + H(+). The catalysed reaction is 17beta-estradiol + reduced [NADPH--hemoprotein reductase] + O2 = 6beta-hydroxyestradiol-17beta + oxidized [NADPH--hemoprotein reductase] + H2O + H(+). The enzyme catalyses all-trans-retinoate + reduced [NADPH--hemoprotein reductase] + O2 = all-trans-4-hydroxyretinoate + oxidized [NADPH--hemoprotein reductase] + H2O + H(+). It carries out the reaction all-trans-retinoate + reduced [NADPH--hemoprotein reductase] + O2 = all-trans-18-hydroxyretinoate + oxidized [NADPH--hemoprotein reductase] + H2O + H(+). It functions in the pathway steroid hormone biosynthesis. Its pathway is cofactor metabolism; retinol metabolism. Its function is as follows. A cytochrome P450 monooxygenase involved in the metabolism of steroid hormones and vitamins during embryogenesis. Mechanistically, uses molecular oxygen inserting one oxygen atom into a substrate, and reducing the second into a water molecule, with two electrons provided by NADPH via cytochrome P450 reductase (NADPH--hemoprotein reductase). Catalyzes the hydroxylation of carbon-hydrogen bonds. Metabolizes 3beta-hydroxyandrost-5-en-17-one (dehydroepiandrosterone, DHEA), a precursor in the biosynthesis of androgen and estrogen steroid hormones. Exhibits high catalytic activity for the formation of hydroxyestrogens from estrone (E1), particularly D-ring hydroxylated estrone at the C16-alpha position. Mainly hydroxylates all trans-retinoic acid (atRA) to 4-hydroxyretinoate and may play a role in atRA clearance during fetal development. Also involved in the oxidative metabolism of xenobiotics including anticonvulsants. This is Cytochrome P450 3A7 from Homo sapiens (Human).